An 82-amino-acid polypeptide reads, in one-letter code: Toxin TdNa6 (82 aa).

Positions 1-20 (MKGMIMLISCLMLIEVVVGG) are cleaved as a signal peptide. The 62-residue stretch at 21–82 (KEGYLLDRSN…KMWHLKTNKC (62 aa)) folds into the LCN-type CS-alpha/beta domain. Disulfide bonds link C32–C82, C36–C58, C44–C63, and C48–C65.

The protein belongs to the long (4 C-C) scorpion toxin superfamily. Sodium channel inhibitor family. Beta subfamily. Expressed by the venom gland.

It localises to the secreted. Beta toxins bind voltage-independently at site-4 of sodium channels (Nav) and shift the voltage of activation toward more negative potentials thereby affecting sodium channel activation and promoting spontaneous and repetitive firing. Is toxic to arthropods. The sequence is that of Toxin TdNa6 from Tityus discrepans (Venezuelan scorpion).